The chain runs to 410 residues: MAGLAPEGSQFDDKQYDKKMQEILTEDFFTSYDDVCESFDSMGLQENLLRGIYAYGFEKPSAIQQRGIVPFCKGLDVIQQAQSGTGKTATFCSGILQQLDYGLVECQALVLAPTRELAQQIEKVMRALGDYLGVKVHACVGGTSVREDQRILASGVHVVVGTPGRVFDMLRRQSLRPDNIKMFVLDEADEMLSRGFKDQIYDIFQLLPSKIQVGVFSATMPPEALEITRKFMNKPVRILVKRDELTLEGIKQFYVNIDKEDWKLDTLCDLYETLAITQSVIFVNTRRKVDWLTDKMRSRDHTVSATHGDMDQNTRDIIMREFRSGSSRVLITTDLLARGIDVQQVSLVINYDLPTQPENYLHRIGRSGRFGRKGVAINFVTRDDERIVFDVQRFYNVTVEELPANVADLL.

A Q motif motif is present at residues 37 to 65 (ESFDSMGLQENLLRGIYAYGFEKPSAIQQ). Positions 68–238 (IVPFCKGLDV…RKFMNKPVRI (171 aa)) constitute a Helicase ATP-binding domain. ATP is bound at residue 81–88 (AQSGTGKT). The DEAD box signature appears at 186–189 (DEAD). The Helicase C-terminal domain maps to 249–410 (GIKQFYVNID…ELPANVADLL (162 aa)).

This sequence belongs to the DEAD box helicase family. eIF4A subfamily. As to quaternary structure, eIF4F is a multi-subunit complex, the composition of which varies with external and internal environmental conditions. It is composed of at least EIF4A, EIF4E and EIF4G.

It catalyses the reaction ATP + H2O = ADP + phosphate + H(+). ATP-dependent RNA helicase which is a subunit of the eIF4F complex involved in cap recognition and is required for mRNA binding to ribosome. In the current model of translation initiation, eIF4A unwinds RNA secondary structures in the 5'-UTR of mRNAs which is necessary to allow efficient binding of the small ribosomal subunit, and subsequent scanning for the initiator codon. The sequence is that of Eukaryotic initiation factor 4A from Zea mays (Maize).